The primary structure comprises 580 residues: CRISPR-associated exonuclease Cas4/endonuclease Cas1 fusion (580 aa).

The CRISPR-associated exonuclease Cas4 stretch occupies residues 1–223 (MAPSDTPPSA…RCSLLPICLP (223 aa)). Position 44 (cysteine 44) interacts with [4Fe-4S] cluster. Residues aspartate 112 and glutamate 125 each contribute to the Mn(2+) site. The [4Fe-4S] cluster site is built by cysteine 212, cysteine 215, and cysteine 221. The tract at residues 248–580 (LYGQTPGARI…IPRYPHYCPR (333 aa)) is CRISPR-associated endonuclease Cas1. 3 residues coordinate Mn(2+): glutamate 401, histidine 472, and glutamate 487.

In the N-terminal section; belongs to the CRISPR-associated exonuclease Cas4 family. This sequence in the C-terminal section; belongs to the CRISPR-associated endonuclease Cas1 family. In terms of assembly, homodimer, forms a heterotetramer with a Cas2 homodimer. It depends on [4Fe-4S] cluster as a cofactor. Mg(2+) is required as a cofactor. The cofactor is Mn(2+).

The enzyme catalyses exonucleolytic cleavage in the 5'- to 3'-direction to yield nucleoside 3'-phosphates.. In terms of biological role, CRISPR (clustered regularly interspaced short palindromic repeat), is an adaptive immune system that provides protection against mobile genetic elements (viruses, transposable elements and conjugative plasmids). CRISPR clusters contain spacers, sequences complementary to antecedent mobile elements, and target invading nucleic acids. CRISPR clusters are transcribed and processed into CRISPR RNA (crRNA). The Cas4 region acts as a ssDNA exonuclease, while the Cas1 region acts as a dsDNA endonuclease. Involved in the integration of spacer DNA into the CRISPR cassette. In Rhodospirillum rubrum (strain ATCC 11170 / ATH 1.1.1 / DSM 467 / LMG 4362 / NCIMB 8255 / S1), this protein is CRISPR-associated exonuclease Cas4/endonuclease Cas1 fusion (cas4-cas1).